Consider the following 525-residue polypeptide: Bifunctional purine biosynthesis protein PurH (525 aa).

In terms of domain architecture, MGS-like spans 1 to 148 (MPSNNLIKNA…KNYKNVIVIV (148 aa)).

The protein belongs to the PurH family.

It carries out the reaction (6R)-10-formyltetrahydrofolate + 5-amino-1-(5-phospho-beta-D-ribosyl)imidazole-4-carboxamide = 5-formamido-1-(5-phospho-D-ribosyl)imidazole-4-carboxamide + (6S)-5,6,7,8-tetrahydrofolate. It catalyses the reaction IMP + H2O = 5-formamido-1-(5-phospho-D-ribosyl)imidazole-4-carboxamide. It participates in purine metabolism; IMP biosynthesis via de novo pathway; 5-formamido-1-(5-phospho-D-ribosyl)imidazole-4-carboxamide from 5-amino-1-(5-phospho-D-ribosyl)imidazole-4-carboxamide (10-formyl THF route): step 1/1. Its pathway is purine metabolism; IMP biosynthesis via de novo pathway; IMP from 5-formamido-1-(5-phospho-D-ribosyl)imidazole-4-carboxamide: step 1/1. The chain is Bifunctional purine biosynthesis protein PurH from Buchnera aphidicola subsp. Acyrthosiphon pisum (strain APS) (Acyrthosiphon pisum symbiotic bacterium).